The following is a 102-amino-acid chain: Small ribosomal subunit protein eS24 (102 aa).

Belongs to the eukaryotic ribosomal protein eS24 family.

The protein is Small ribosomal subunit protein eS24 of Methanococcus maripaludis (strain C5 / ATCC BAA-1333).